A 342-amino-acid polypeptide reads, in one-letter code: MFKETLRECMEGHTLAERKAEQVMDAIMKGEATASQIASLLTVLRFRGETVAEMTGFARAMRRHSIQIEHSFSQVVDTCGTGGDDVGTFNISTATALLVSALGVPVAKHGNRAVSSKSGSADVLEALQIPIQSSPEEATASLQKHNMCFMFAPLYHVAMKHAVAPRKEIGFRTIFNLLGPLTNPARAEHQLIGVYDRNFAEKMAETLRRLGTKHSLLVAGHGGLDELSITGPSTVFEVKGDAIDRYELIPEDVGLERGDLAQIQVSTVQESATLIDQVLIGKANKSAQQIVLLNAGAALYAADRVDSIKAGVALAKEGIASGHVADHVRNLRQTDQEAEQHA.

Residues G80, 83–84 (GD), T88, 90–93 (NIST), 108–116 (KHGNRAVSS), and S120 contribute to the 5-phospho-alpha-D-ribose 1-diphosphate site. Position 80 (G80) interacts with anthranilate. S92 serves as a coordination point for Mg(2+). N111 is a binding site for anthranilate. R166 is a binding site for anthranilate. 2 residues coordinate Mg(2+): D225 and E226.

It belongs to the anthranilate phosphoribosyltransferase family. Homodimer. Requires Mg(2+) as cofactor.

The enzyme catalyses N-(5-phospho-beta-D-ribosyl)anthranilate + diphosphate = 5-phospho-alpha-D-ribose 1-diphosphate + anthranilate. Its pathway is amino-acid biosynthesis; L-tryptophan biosynthesis; L-tryptophan from chorismate: step 2/5. Catalyzes the transfer of the phosphoribosyl group of 5-phosphorylribose-1-pyrophosphate (PRPP) to anthranilate to yield N-(5'-phosphoribosyl)-anthranilate (PRA). The chain is Anthranilate phosphoribosyltransferase from Halalkalibacterium halodurans (strain ATCC BAA-125 / DSM 18197 / FERM 7344 / JCM 9153 / C-125) (Bacillus halodurans).